The sequence spans 119 residues: MORF4 family associated protein 1 like 2 (119 aa).

A compositionally biased stretch (basic and acidic residues) spans 1–16 (MRPVDADEAREPREEP). Positions 1–36 (MRPVDADEAREPREEPGSPLSPAPRAGRENLASLER) are disordered.

It belongs to the MORF4 family-associated protein family. May interact with CDK2AP1.

In terms of biological role, may play a role in cell proliferation. This Homo sapiens (Human) protein is MORF4 family associated protein 1 like 2.